Here is a 308-residue protein sequence, read N- to C-terminus: Ornithine carbamoyltransferase (308 aa).

Residues 56 to 59, Gln83, Arg107, and 134 to 137 each bind carbamoyl phosphate; these read STRT and HPCQ. L-ornithine is bound by residues Asn165, Asp225, and 229–230; that span reads SM. Carbamoyl phosphate contacts are provided by residues 266–267 and Arg294; that span reads CL.

This sequence belongs to the aspartate/ornithine carbamoyltransferase superfamily. OTCase family.

It is found in the cytoplasm. The enzyme catalyses carbamoyl phosphate + L-ornithine = L-citrulline + phosphate + H(+). It participates in amino-acid biosynthesis; L-arginine biosynthesis; L-arginine from L-ornithine and carbamoyl phosphate: step 1/3. Functionally, reversibly catalyzes the transfer of the carbamoyl group from carbamoyl phosphate (CP) to the N(epsilon) atom of ornithine (ORN) to produce L-citrulline. The polypeptide is Ornithine carbamoyltransferase (Paracoccus denitrificans (strain Pd 1222)).